The following is a 178-amino-acid chain: ATP synthase subunit delta (178 aa).

This sequence belongs to the ATPase delta chain family. F-type ATPases have 2 components, F(1) - the catalytic core - and F(0) - the membrane proton channel. F(1) has five subunits: alpha(3), beta(3), gamma(1), delta(1), epsilon(1). F(0) has three main subunits: a(1), b(2) and c(10-14). The alpha and beta chains form an alternating ring which encloses part of the gamma chain. F(1) is attached to F(0) by a central stalk formed by the gamma and epsilon chains, while a peripheral stalk is formed by the delta and b chains.

The protein localises to the cell membrane. Its function is as follows. F(1)F(0) ATP synthase produces ATP from ADP in the presence of a proton or sodium gradient. F-type ATPases consist of two structural domains, F(1) containing the extramembraneous catalytic core and F(0) containing the membrane proton channel, linked together by a central stalk and a peripheral stalk. During catalysis, ATP synthesis in the catalytic domain of F(1) is coupled via a rotary mechanism of the central stalk subunits to proton translocation. This protein is part of the stalk that links CF(0) to CF(1). It either transmits conformational changes from CF(0) to CF(1) or is implicated in proton conduction. The protein is ATP synthase subunit delta of Streptococcus pyogenes serotype M1.